We begin with the raw amino-acid sequence, 1745 residues long: Collagen alpha-3(V) chain (1745 aa).

Positions 1–29 (MGNRRDLGQPRAGLCLLLAALQLLPGTQA) are cleaved as a signal peptide. Residues 62–224 (DRAFRIGQAS…QACERYLPDC (163 aa)) form the Laminin G-like domain. Asparagine 102 and asparagine 141 each carry an N-linked (GlcNAc...) asparagine glycan. Positions 211 to 391 (QAAFQACERY…AVIEKGQQFE (181 aa)) are nonhelical region. 4 disordered regions span residues 230–304 (AATV…TPTP), 322–362 (RSLD…EYPS), 387–439 (GQQF…RGPP), and 476–1492 (SMKG…PAEL). A compositionally biased stretch (basic residues) spans 244-267 (PRRKGKGKGRKKGRGRKGKGRKKN). The O-linked (Xyl...) (chondroitin sulfate) serine glycan is linked to serine 349. Collagen-like domains are found at residues 391-440 (EGPP…GPPG) and 482-538 (GPVG…DGAR). The segment at 392 to 1489 (GPPGAPGPQG…AGPPGPPGAP (1098 aa)) is triple-helical region. The span at 406-424 (SGPPGPPGFPGDPGPPGPA) shows a compositional bias: pro residues. 3 stretches are compositionally biased toward low complexity: residues 426–439 (LPGI…RGPP), 489–499 (RPGPVGLPGHP), and 597–619 (EPGP…PGVT). Basic and acidic residues predominate over residues 724–733 (QGEKGEKGED). The segment covering 765 to 792 (PKGQAGQAGEEGPPGSAGEKGKLGVPGL) has biased composition (low complexity). 3 consecutive Collagen-like domains span residues 824-877 (GQPG…QGPP), 905-950 (GFQG…GLPG), and 951-989 (LEGR…GDPG). Over residues 967 to 979 (LGKEGPAGLRGFP) the composition is skewed to low complexity. Residues 1016–1025 (GPAGGIGLPG) show a composition bias toward gly residues. Low complexity-rich tracts occupy residues 1116–1126 (ADGAQGRRGPP) and 1141–1152 (VGVIGPPGLQGL). Residues 1190–1199 (GLPGGVGQPG) are compositionally biased toward gly residues. The segment covering 1213–1222 (PGPPGAPGIP) has biased composition (pro residues). Low complexity predominate over residues 1234 to 1243 (SGPSGAAGPP). Positions 1318 to 1330 (MGREGREGEKGAK) are enriched in basic and acidic residues. Positions 1405–1416 (IGLIGLIGPPGE) are enriched in low complexity. Over residues 1429–1443 (QGPPGPKGDPGPPGP) the composition is skewed to pro residues. Positions 1430 to 1488 (GPPGPKGDPGPPGPIGSLGHPGPPGVAGPLGQKGSKGSPGSMGPRGDTGPAGPPGPPGA) constitute a Collagen-like 6 domain. The segment covering 1458-1479 (PLGQKGSKGSPGSMGPRGDTGP) has biased composition (low complexity). Residues 1514 to 1744 (EEVLASLTSL…GFELGPVCFS (231 aa)) enclose the Fibrillar collagen NC1 domain. Intrachain disulfides connect cysteine 1585–cysteine 1742 and cysteine 1651–cysteine 1696.

This sequence belongs to the fibrillar collagen family. As to quaternary structure, trimers of two alpha 1(V) and one alpha 2(V) chains in most tissues and trimers of one alpha 1(V), one alpha 2(V), and one alpha 3(V) chains in placenta. Post-translationally, prolines at the third position of the tripeptide repeating unit (G-X-Y) are hydroxylated in some or all of the chains. As to expression, detected in fibroblasts (at protein level). Detected in urine (at protein level).

Its subcellular location is the secreted. It localises to the extracellular space. It is found in the extracellular matrix. Type V collagen is a member of group I collagen (fibrillar forming collagen). It is a minor connective tissue component of nearly ubiquitous distribution. Type V collagen binds to DNA, heparan sulfate, thrombospondin, heparin, and insulin. The protein is Collagen alpha-3(V) chain (COL5A3) of Homo sapiens (Human).